A 265-amino-acid chain; its full sequence is Putative N(omega)-hydroxy-L-arginine synthase DcsA (265 aa).

Belongs to the DcsA family. Requires heme as cofactor.

Involved in the biosynthesis of the antibiotic D-cycloserine (DCS), a cyclic structural analog of D-alanine, used as an antitubercular agent. Could catalyze the production of N(omega)-hydroxy-L-arginine (NHA) from L-arginine. This Streptomyces lavendulae protein is Putative N(omega)-hydroxy-L-arginine synthase DcsA.